The following is a 991-amino-acid chain: Seizure protein 6 (991 aa).

A signal peptide spans 1–19 (MRPAALLLLPSLLALLAHG). At 20–922 (LSSEAPITGE…AASSALDAAH (903 aa)) the chain is on the extracellular side. Residues 79–193 (EGLEREEAPQ…QEGPGDMDRP (115 aa)) form a disordered region. Residues 119 to 132 (TSPTPAVAAAPTQP) show a composition bias toward low complexity. Over residues 175–184 (PPSQAWTPTQ) the composition is skewed to polar residues. A disulfide bridge connects residues Cys241 and Cys268. One can recognise a CUB 1 domain in the interval 241–353 (CSWNFSGPEG…HFRYQAYLLS (113 aa)). Asn286 carries an N-linked (GlcNAc...) asparagine glycan. The 60-residue stretch at 352–411 (LSCHFPRRPAYGDVTVTSLHPGGSAHFHCATGYQLKGARFLTCLNATQPFWDSQEPVCIA) folds into the Sushi 1 domain. 12 disulfide bridges follow: Cys354–Cys394, Cys380–Cys409, Cys413–Cys440, Cys529–Cys571, Cys556–Cys586, Cys590–Cys616, Cys707–Cys749, Cys735–Cys762, Cys768–Cys810, Cys796–Cys827, Cys835–Cys877, and Cys863–Cys892. Residues Asn396, Asn433, and Asn538 are each glycosylated (N-linked (GlcNAc...) asparagine). Positions 413–524 (CGGVIRNATT…AGMALRYEAF (112 aa)) constitute a CUB 2 domain. Residues 527–588 (GHCYEPFVKY…WNETEPACRA (62 aa)) enclose the Sushi 2 domain. One can recognise a CUB 3 domain in the interval 590-701 (CSGEITDSAG…QGFVIHFFEV (112 aa)). 3 Sushi domains span residues 705-764 (DTCP…SCQR), 766-829 (TSCH…KCLL), and 833-894 (KPCH…ICRA). A helical membrane pass occupies residues 923-943 (LAAAIFLPLVAMVLLVGGVYL). Residues 944–991 (YFSRFQGKSPLQLPRTHPRPYNRITVESAFDNPTYETGSLSFAGDERI) lie on the Cytoplasmic side of the membrane.

The protein belongs to the SEZ6 family. Post-translationally, glycosylated. In terms of tissue distribution, brain-specific. Expressed in extrasynaptic and synaptic subcellular fractions (at protein level). Expression correlates with the most active periods of cortical neurogenesis and neuronal maturation. Expression is restricted to the gray matter with higher levels in the forebrain including the olfactory bulb, anterior olfactory nuclei, olfactory tubercle, striatum, hippocampal CA1 pyramidal cell layer and cerebral cortex. Expression is up-regulated with the convulsant drug, pentylenetetrazole.

It is found in the cell membrane. It localises to the cell projection. The protein resides in the dendrite. Its subcellular location is the synapse. The protein localises to the secreted. It is found in the cytoplasm. Its function is as follows. May play a role in cell-cell recognition and in neuronal membrane signaling. Seems to be important for the achievement of the necessary balance between dendrite elongation and branching during the elaboration of a complex dendritic arbor. Involved in the development of appropriate excitatory synaptic connectivity. This is Seizure protein 6 (Sez6) from Mus musculus (Mouse).